Reading from the N-terminus, the 185-residue chain is Threonylcarbamoyl-AMP synthase (185 aa).

Residues 4–185 (SFRVQQAARE…LATGEVVRPG (182 aa)) enclose the YrdC-like domain.

This sequence belongs to the SUA5 family. TsaC subfamily.

The protein resides in the cytoplasm. It catalyses the reaction L-threonine + hydrogencarbonate + ATP = L-threonylcarbamoyladenylate + diphosphate + H2O. Its function is as follows. Required for the formation of a threonylcarbamoyl group on adenosine at position 37 (t(6)A37) in tRNAs that read codons beginning with adenine. Catalyzes the conversion of L-threonine, HCO(3)(-)/CO(2) and ATP to give threonylcarbamoyl-AMP (TC-AMP) as the acyladenylate intermediate, with the release of diphosphate. This is Threonylcarbamoyl-AMP synthase from Pseudomonas putida (strain ATCC 47054 / DSM 6125 / CFBP 8728 / NCIMB 11950 / KT2440).